The primary structure comprises 400 residues: Mannitol-1-phosphate 5-dehydrogenase (400 aa).

12 to 23 (AVHFGAGNIGRG) provides a ligand contact to NAD(+). The active site involves K221.

It belongs to the mannitol dehydrogenase family. In terms of assembly, monomer.

It catalyses the reaction D-mannitol 1-phosphate + NAD(+) = beta-D-fructose 6-phosphate + NADH + H(+). In terms of biological role, catalyzes the NAD(H)-dependent interconversion of D-fructose 6-phosphate and D-mannitol 1-phosphate in the mannitol metabolic pathway. The polypeptide is Mannitol-1-phosphate 5-dehydrogenase (Pyricularia oryzae (strain Y34) (Rice blast fungus)).